A 59-amino-acid polypeptide reads, in one-letter code: uncharacterized protein (59 aa).

33–40 (GRRRVGKT) is a binding site for ATP.

This is an uncharacterized protein from Methanocaldococcus jannaschii (strain ATCC 43067 / DSM 2661 / JAL-1 / JCM 10045 / NBRC 100440) (Methanococcus jannaschii).